The sequence spans 427 residues: MKASDTGSAGVLAGKLSALLSYLRSFLPFMWKNFMQDRVLLSAGSLAFQTLLSLIPLMAVVLSVLSVSPVFETFKRYVDDFLFQNFVPASGSMIREYFWEFIGNTATVPTVGGIFLLIIALFLISTIDHTINQIWDVRAPRKILQGFTLYWTVLTLGPIIIGSGLVASSYVWYTVFTEGPFLELRTRILSYLPLVNSFLAFFLLYMLVPNHRVRFLHAVSGAFLATWLFELSKQWFSFYVKTFATFEHIYGALSVIPLLFFWIYLIWVVALSGAEFVYCLGAVRQEVKKERKEFSTLHGLWDVLAVMEQIWKGQQCGQYVRYKKHALSGKGIDAARVRSIVAVLKENRLIHVTEDGEFALHCDIHEVTLFDLYSILPPEILVGSDAAVSGKRFEQLYELEAAVAACLRESLDKPLALYIKQEEGLPE.

6 helical membrane-spanning segments follow: residues 51–71 (LLSL…SPVF), 107–127 (TVPT…ISTI), 147–167 (FTLY…GLVA), 188–208 (ILSY…YMLV), 218–238 (AVSG…WFSF), and 251–271 (GALS…VVAL).

The protein belongs to the UPF0761 family.

Its subcellular location is the cell inner membrane. In Chlorobium phaeobacteroides (strain BS1), this protein is UPF0761 membrane protein Cphamn1_1013.